Here is a 243-residue protein sequence, read N- to C-terminus: 1-(5-phosphoribosyl)-5-[(5-phosphoribosylamino)methylideneamino] imidazole-4-carboxamide isomerase (243 aa).

D9 acts as the Proton acceptor in catalysis. Catalysis depends on D131, which acts as the Proton donor.

This sequence belongs to the HisA/HisF family.

It is found in the cytoplasm. It carries out the reaction 1-(5-phospho-beta-D-ribosyl)-5-[(5-phospho-beta-D-ribosylamino)methylideneamino]imidazole-4-carboxamide = 5-[(5-phospho-1-deoxy-D-ribulos-1-ylimino)methylamino]-1-(5-phospho-beta-D-ribosyl)imidazole-4-carboxamide. Its pathway is amino-acid biosynthesis; L-histidine biosynthesis; L-histidine from 5-phospho-alpha-D-ribose 1-diphosphate: step 4/9. The protein is 1-(5-phosphoribosyl)-5-[(5-phosphoribosylamino)methylideneamino] imidazole-4-carboxamide isomerase of Campylobacter jejuni (strain RM1221).